The primary structure comprises 265 residues: Undecaprenyl-diphosphatase 1 (265 aa).

7 helical membrane passes run 4 to 24 (IIIAFILGIVEGLAEFLPISS), 42 to 62 (AKTFEIVIQLGAILAIAILYH), 84 to 104 (FHVFLGVFPAVVAGLLLHDVI), 108 to 128 (LFQPYTVVIGLVAGAILMILA), 184 to 204 (SEFSFLIALPVMVGATSLDLL), 217 to 237 (MFAVGFITSFIVAMLAVVTFL), and 245 to 265 (LKPFAYYRILLAILFTLFVLL).

This sequence belongs to the UppP family.

The protein localises to the cell membrane. It catalyses the reaction di-trans,octa-cis-undecaprenyl diphosphate + H2O = di-trans,octa-cis-undecaprenyl phosphate + phosphate + H(+). Its function is as follows. Catalyzes the dephosphorylation of undecaprenyl diphosphate (UPP). Confers resistance to bacitracin. This chain is Undecaprenyl-diphosphatase 1, found in Bacillus cereus (strain ZK / E33L).